Here is a 419-residue protein sequence, read N- to C-terminus: Creatine kinase S-type, mitochondrial (419 aa).

A mitochondrion-targeting transit peptide spans 1-39 (MASAFSKLLTGRNASLLFTTLGTSALTTGYLLNRQKVSA). Residues 40 to 64 (DAREQHKLFPPSADYPDLRKHNNCM) are cardiolipin-binding. The region spanning 46–132 (KLFPPSADYP…FDPVIKLRHN (87 aa)) is the Phosphagen kinase N-terminal domain. The 243-residue stretch at 159 to 401 (YVLSSRVRTG…NYLVDCEKKL (243 aa)) folds into the Phosphagen kinase C-terminal domain. Residues 162-166 (SSRVR) and H225 contribute to the ATP site. Y255 is subject to Phosphotyrosine. ATP contacts are provided by residues R270, R326, 354-359 (RGTGGV), and D369. Position 356 is a phosphothreonine (T356).

It belongs to the ATP:guanido phosphotransferase family. As to quaternary structure, exists as an octamer composed of four CKMT2 homodimers.

Its subcellular location is the mitochondrion inner membrane. The catalysed reaction is creatine + ATP = N-phosphocreatine + ADP + H(+). Its function is as follows. Reversibly catalyzes the transfer of phosphate between ATP and various phosphogens (e.g. creatine phosphate). Creatine kinase isoenzymes play a central role in energy transduction in tissues with large, fluctuating energy demands, such as skeletal muscle, heart, brain and spermatozoa. The protein is Creatine kinase S-type, mitochondrial (Ckmt2) of Mus musculus (Mouse).